The sequence spans 308 residues: Aspartate carbamoyltransferase catalytic subunit (308 aa).

Arginine 55 and threonine 56 together coordinate carbamoyl phosphate. Lysine 83 contacts L-aspartate. Residues arginine 105, histidine 133, and glutamine 136 each coordinate carbamoyl phosphate. 2 residues coordinate L-aspartate: arginine 166 and arginine 220. Carbamoyl phosphate is bound by residues glycine 261 and proline 262.

This sequence belongs to the aspartate/ornithine carbamoyltransferase superfamily. ATCase family. Heterododecamer (2C3:3R2) of six catalytic PyrB chains organized as two trimers (C3), and six regulatory PyrI chains organized as three dimers (R2).

The enzyme catalyses carbamoyl phosphate + L-aspartate = N-carbamoyl-L-aspartate + phosphate + H(+). It participates in pyrimidine metabolism; UMP biosynthesis via de novo pathway; (S)-dihydroorotate from bicarbonate: step 2/3. In terms of biological role, catalyzes the condensation of carbamoyl phosphate and aspartate to form carbamoyl aspartate and inorganic phosphate, the committed step in the de novo pyrimidine nucleotide biosynthesis pathway. The chain is Aspartate carbamoyltransferase catalytic subunit from Chlorobaculum parvum (strain DSM 263 / NCIMB 8327) (Chlorobium vibrioforme subsp. thiosulfatophilum).